The following is an 86-amino-acid chain: Small ribosomal subunit protein bS16 (86 aa).

It belongs to the bacterial ribosomal protein bS16 family.

In Acidithiobacillus ferrooxidans (strain ATCC 23270 / DSM 14882 / CIP 104768 / NCIMB 8455) (Ferrobacillus ferrooxidans (strain ATCC 23270)), this protein is Small ribosomal subunit protein bS16.